The following is a 1564-amino-acid chain: Superkiller complex protein 3 (1564 aa).

S2 is subject to N-acetylserine. TPR repeat units follow at residues 6 to 39 (VKTA…EKNN), 40 to 73 (YNAW…EPDQ), 272 to 305 (GPGL…SPVC), 307 to 339 (SGWY…VDNL), 386 to 419 (PGLL…YPDL), 420 to 453 (AEVH…DTEV), 455 to 492 (EYHY…DTYM), 493 to 527 (GKVF…DDTD), 564 to 597 (KWAW…DPKD), 598 to 631 (FNCW…NPES), 633 to 665 (YSVF…KEDY), 679 to 713 (MAKA…RADV), 790 to 824 (AQHL…DSNN), 826 to 860 (LYWN…EQIN), 861 to 894 (AVAW…DPSY), 980 to 1013 (APAF…LQTA), 1020 to 1054 (NVAI…LEDI), 1056 to 1084 (GFAL…VESE), 1326 to 1359 (KWSL…NPDQ), and 1400 to 1433 (VPAW…ASQR).

Belongs to the SKI3 family. As to quaternary structure, component of the SKI complex which consists of SKIC2, SKIC3 and SKIC8. Interacts with PAF1. Widely expressed with the highest levels observed in vascular tissues, lymph node, pituitary, lung and intestine. Not expressed in the liver.

Its subcellular location is the cytoplasm. It localises to the nucleus. Its function is as follows. Component of the SKI complex, a multiprotein complex that assists the RNA-degrading exosome during the mRNA decay and quality-control pathways. The SKI complex catalyzes mRNA extraction from 80S ribosomal complexes in the 3'-5' direction and channels mRNA to the cytosolic exosome for degradation. SKI-mediated extraction of mRNA from stalled ribosomes allow binding of the Pelota-HBS1L complex and subsequent ribosome disassembly by ABCE1 for ribosome recycling. In the nucleus, the SKI complex associates with transcriptionally active genes in a manner dependent on PAF1 complex (PAF1C). The chain is Superkiller complex protein 3 from Homo sapiens (Human).